The sequence spans 197 residues: MKRVSIELLEREASTKGDKKSKRKEGLVPVEIYGKGVQNIHAYMRIKDLAAMPHGTTFLIEAKLGNEVLPCLLKDIQYGWLGDNPVHVDLYNISNVTETDVEVPLEFVGTPKGVELGGTLEIHLHSIELKVDPRNIPEKITVDISNVDLGGVLHVKDLNIPANCRLMEDPEEVVLVVAEPEETKEGEEEQAQEAATK.

This sequence belongs to the bacterial ribosomal protein bL25 family. CTC subfamily. In terms of assembly, part of the 50S ribosomal subunit; part of the 5S rRNA/L5/L18/L25 subcomplex. Contacts the 5S rRNA. Binds to the 5S rRNA independently of L5 and L18.

In terms of biological role, this is one of the proteins that binds to the 5S RNA in the ribosome where it forms part of the central protuberance. The sequence is that of Large ribosomal subunit protein bL25 from Hydrogenobaculum sp. (strain Y04AAS1).